The chain runs to 102 residues: Putative pterin-4-alpha-carbinolamine dehydratase (102 aa).

Belongs to the pterin-4-alpha-carbinolamine dehydratase family.

The catalysed reaction is (4aS,6R)-4a-hydroxy-L-erythro-5,6,7,8-tetrahydrobiopterin = (6R)-L-erythro-6,7-dihydrobiopterin + H2O. This chain is Putative pterin-4-alpha-carbinolamine dehydratase, found in Burkholderia cenocepacia (strain HI2424).